A 313-amino-acid polypeptide reads, in one-letter code: Secreted mono- and diacylglycerol lipase MDL5 (313 aa).

Positions 1 to 20 (MQLQYVLTLLWIIFAQNVFS) are cleaved as a signal peptide. The cysteines at positions 66 and 306 are disulfide-linked. Residues N72 and N111 are each glycosylated (N-linked (GlcNAc...) asparagine). The Nucleophile role is filled by S180. Residue D238 is part of the active site. A glycan (N-linked (GlcNAc...) asparagine) is linked at N263. Residue H290 is part of the active site.

It belongs to the AB hydrolase superfamily. Lipase family. Class 3 subfamily.

The protein localises to the secreted. Its subcellular location is the cell wall. It carries out the reaction a monoacylglycerol + H2O = glycerol + a fatty acid + H(+). The catalysed reaction is a diacylglycerol + H2O = a monoacylglycerol + a fatty acid + H(+). Its function is as follows. Secreted lipase involved in Dandruff and seborrheic dermatitis (D/SD) probably via lipase-mediated breakdown of sebaceous lipids and release of irritating free fatty acids. Shows activity against monoglyceride and diglyceride substrates, but not triglyceride substrates and does not exhibit regio-selective production of diacylglycerols. Cleaves oleic acid from 1,2 isomers of diolein on both the 1 and the 2 position of the glycerol backbone, resulting mainly in free fatty acids but no monoolein is detected. Shows activity on monoolein and liberates mostly free fatty acids, but can also perform the reverse reaction and produce diolein. The protein is Secreted mono- and diacylglycerol lipase MDL5 of Malassezia globosa (strain ATCC MYA-4612 / CBS 7966) (Dandruff-associated fungus).